The following is a 236-amino-acid chain: Mammalian ependymin-related protein 1 (236 aa).

The first 35 residues, 1–35, serve as a signal peptide directing secretion; it reads MPRRAPLRVARGSLDAWLLGGLWVCALGCLCGVGM. Cystine bridges form between Cys54–Cys184, Cys100–Cys234, and Cys125–Cys222. N-linked (GlcNAc...) asparagine glycans are attached at residues Asn142 and Asn194.

This sequence belongs to the ependymin family. As to quaternary structure, homodimer. N-glycosylated; the glycan contains mannose-6-phosphate moieties.

Its subcellular location is the lysosome lumen. The protein localises to the secreted. Functionally, binds anionic lipids and gangliosides at acidic pH. The protein is Mammalian ependymin-related protein 1 (EPDR1) of Bos taurus (Bovine).